Here is a 336-residue protein sequence, read N- to C-terminus: D-altritol 5-dehydrogenase (336 aa).

Positions 37, 59, 60, 89, 92, 95, and 103 each coordinate Zn(2+).

Belongs to the zinc-containing alcohol dehydrogenase family. Requires Zn(2+) as cofactor.

The catalysed reaction is D-altritol + NAD(+) = keto-D-tagatose + NADH + H(+). The protein operates within carbohydrate metabolism. Functionally, involved in D-altritol catabolism. Catalyzes the oxidation of D-altritol to D-tagatose. The sequence is that of D-altritol 5-dehydrogenase from Agrobacterium fabrum (strain C58 / ATCC 33970) (Agrobacterium tumefaciens (strain C58)).